The primary structure comprises 350 residues: Methionine import ATP-binding protein MetN (350 aa).

The ABC transporter domain occupies 2–242; the sequence is IELKGISQHF…PRHDVTRALI (241 aa). Residue 39-46 coordinates ATP; it reads GRSGAGKS.

The protein belongs to the ABC transporter superfamily. Methionine importer (TC 3.A.1.24) family. In terms of assembly, the complex is composed of two ATP-binding proteins (MetN), two transmembrane proteins (MetI) and a solute-binding protein (MetQ).

The protein localises to the cell inner membrane. It catalyses the reaction L-methionine(out) + ATP + H2O = L-methionine(in) + ADP + phosphate + H(+). The enzyme catalyses D-methionine(out) + ATP + H2O = D-methionine(in) + ADP + phosphate + H(+). Part of the ABC transporter complex MetNIQ involved in methionine import. Responsible for energy coupling to the transport system. The chain is Methionine import ATP-binding protein MetN from Ralstonia nicotianae (strain ATCC BAA-1114 / GMI1000) (Ralstonia solanacearum).